The chain runs to 1158 residues: ATP-dependent helicase/deoxyribonuclease subunit B (1158 aa).

Residue 8 to 15 coordinates ATP; it reads GRAGTGKS. 4 residues coordinate [4Fe-4S] cluster: C791, C1112, C1115, and C1121.

It belongs to the helicase family. AddB/RexB type 1 subfamily. As to quaternary structure, heterodimer of AddA and AddB. The cofactor is Mg(2+). It depends on [4Fe-4S] cluster as a cofactor.

In terms of biological role, the heterodimer acts as both an ATP-dependent DNA helicase and an ATP-dependent, dual-direction single-stranded exonuclease. Recognizes the chi site generating a DNA molecule suitable for the initiation of homologous recombination. The AddB subunit has 5' -&gt; 3' nuclease activity but not helicase activity. This Clostridium perfringens (strain 13 / Type A) protein is ATP-dependent helicase/deoxyribonuclease subunit B.